Reading from the N-terminus, the 332-residue chain is Glycerol-3-phosphate dehydrogenase [NAD(P)+] (332 aa).

NADPH is bound by residues Ser10, Trp11, Lys31, and Lys105. The sn-glycerol 3-phosphate site is built by Lys105, Gly136, and Ser138. Ala140 provides a ligand contact to NADPH. Sn-glycerol 3-phosphate-binding residues include Lys191, Asp244, Ser254, Arg255, and Asn256. Lys191 functions as the Proton acceptor in the catalytic mechanism. Arg255 contacts NADPH. Residues Val279 and Glu281 each coordinate NADPH.

It belongs to the NAD-dependent glycerol-3-phosphate dehydrogenase family.

Its subcellular location is the cytoplasm. The enzyme catalyses sn-glycerol 3-phosphate + NAD(+) = dihydroxyacetone phosphate + NADH + H(+). It carries out the reaction sn-glycerol 3-phosphate + NADP(+) = dihydroxyacetone phosphate + NADPH + H(+). Its pathway is membrane lipid metabolism; glycerophospholipid metabolism. In terms of biological role, catalyzes the reduction of the glycolytic intermediate dihydroxyacetone phosphate (DHAP) to sn-glycerol 3-phosphate (G3P), the key precursor for phospholipid synthesis. In Anaeromyxobacter dehalogenans (strain 2CP-C), this protein is Glycerol-3-phosphate dehydrogenase [NAD(P)+].